A 204-amino-acid chain; its full sequence is Prephenate decarboxylase (204 aa).

Belongs to the prephenate decarboxylase family.

The protein localises to the cytoplasm. It carries out the reaction prephenate + H(+) = 3-[(4R)-4-hydroxycyclohexa-1,5-dien-1-yl]-2-oxopropanoate + CO2. It participates in antibiotic biosynthesis; bacilysin biosynthesis. Part of the bacABCDEF operon responsible for the biosynthesis of the nonribosomally synthesized dipeptide antibiotic bacilysin, composed of L-alanine and L-anticapsin. Bacilysin is an irreversible inactivator of the glutaminase domain of glucosamine synthetase. BacA is an unusual prephenate decarboxylase that avoids the typical aromatization of the cyclohexadienol ring of prephenate. BacA catalyzes the protonation of prephenate (1-carboxy-4-hydroxy-alpha-oxo-2,5-cyclohexadiene-1-propanoic acid) at C6 position, followed by a decarboxylation to produce the endocyclic-delta(4),delta(8)-7R-dihydro-hydroxyphenylpyruvate (en-H2HPP). En-H2HPP is able to undergo a slow nonenzymatic isomerization to produce the exocyclic-delta(3),delta(5)-dihydro-hydroxyphenylpyruvate (ex-H2HPP). BacA isomerizes only the pro-R double bond in prephenate. In Bacillus subtilis, this protein is Prephenate decarboxylase.